The chain runs to 609 residues: MIALEKLSEKNKRSTKKCEISIYVGNLPSTCQSSDLHELFEPFGNFSKFHMLSRKKNKSTDSKSPTLFAFITFENKCSADNAIASLNGSSFQGNTLKVEYTHIVERYKNKLENGVDQIHHSNNEKAKIRFSKIEKYTKETRPTVSEVRVSTKDKKEYSMNTSNLVQSNPPKVHDKENAFAEATGTSILSSKAVQTLLVSDFTENEPKHLSIRPNCKDNNTPSISNTFIEPYKENNTEHLHLKSAFEPCQMMPGMLLEQNPQFLYDNPSIFVIGILNLPLKVSPVELYNEFSNHGHILGVAINQSINEDMTHYAEVAVSTYESCIEIIEKFHAIAYEGSILQLFIKQPVQGFCSNLLNHPEGTMTNLLPPNMEMPQPFEIPVIAKTSALPNPFISFPSFQTSYETTVTPTPTSTPTIDPCNLFVKNLDDNIVGNTQQLEELFSKFGRIKSCTLASYPSTEISKGYGFVSFSHPFEAVQAINTLNGVLFGKKRLFVNYAEKREDRKKRLSAIFSQSYPPVVPSPSLTIPMATEPQILEYHQEWPQPLIQSIQQHGYSDPRQTLPTRLDSCAAKLREAVISNENLNPSHKFGIKHSTFKTSLSPLTNIVLNQ.

RRM domains are found at residues 20–103 (ISIY…YTHI) and 419–499 (CNLF…YAEK).

The protein resides in the cytoplasm. In terms of biological role, has a role in sporulation. This is Meiotically up-regulated gene 28 protein (mug28) from Schizosaccharomyces pombe (strain 972 / ATCC 24843) (Fission yeast).